Reading from the N-terminus, the 108-residue chain is PTS system galactose-specific EIIB component (108 aa).

The PTS EIIB type-3 domain occupies 3 to 108; it reads DKVIALACAA…VLAAAENLMN (106 aa). The active-site Phosphocysteine intermediate is Cys10. Cys10 is subject to Phosphocysteine; by EIIA.

It carries out the reaction N(pros)-phospho-L-histidyl-[protein] + D-galactose(out) = D-galactose 6-phosphate(in) + L-histidyl-[protein]. The phosphoenolpyruvate-dependent sugar phosphotransferase system (sugar PTS), a major carbohydrate active transport system, catalyzes the phosphorylation of incoming sugar substrates concomitantly with their translocation across the cell membrane. Involved in galactose transport with PtcA and Lmg_0963. In Lactococcus lactis subsp. cremoris (strain MG1363), this protein is PTS system galactose-specific EIIB component.